Reading from the N-terminus, the 263-residue chain is 4-hydroxy-tetrahydrodipicolinate reductase (263 aa).

NAD(+) is bound by residues 7-12 (GFKGRM), 96-98 (GTT), and 122-125 (APNF). His152 functions as the Proton donor/acceptor in the catalytic mechanism. His153 contributes to the (S)-2,3,4,5-tetrahydrodipicolinate binding site. Lys156 functions as the Proton donor in the catalytic mechanism. 162–163 (GT) contacts (S)-2,3,4,5-tetrahydrodipicolinate.

Belongs to the DapB family.

Its subcellular location is the cytoplasm. The catalysed reaction is (S)-2,3,4,5-tetrahydrodipicolinate + NAD(+) + H2O = (2S,4S)-4-hydroxy-2,3,4,5-tetrahydrodipicolinate + NADH + H(+). The enzyme catalyses (S)-2,3,4,5-tetrahydrodipicolinate + NADP(+) + H2O = (2S,4S)-4-hydroxy-2,3,4,5-tetrahydrodipicolinate + NADPH + H(+). It participates in amino-acid biosynthesis; L-lysine biosynthesis via DAP pathway; (S)-tetrahydrodipicolinate from L-aspartate: step 4/4. Functionally, catalyzes the conversion of 4-hydroxy-tetrahydrodipicolinate (HTPA) to tetrahydrodipicolinate. The sequence is that of 4-hydroxy-tetrahydrodipicolinate reductase from Listeria innocua serovar 6a (strain ATCC BAA-680 / CLIP 11262).